The sequence spans 946 residues: Rho GTPase-activating protein 4 (946 aa).

The F-BAR domain maps to 19–317 (TQVKEMRWQL…AVEALDPPGD (299 aa)). Residues 128-195 (LAQRLSHIAE…REAERQEEKR (68 aa)) adopt a coiled-coil conformation. Basic and acidic residues predominate over residues 187–196 (EAERQEEKRA). Disordered stretches follow at residues 187–220 (EAERQEEKRAGRSVPTTTAGATEAGPLRKSSLKK) and 402–435 (LDSFQTSPSTESLKSTSSDPGSRQAGRRRGQQQE). Low complexity-rich tracts occupy residues 202–211 (TTTAGATEAG) and 407–419 (TSPSTESLKSTSS). The 189-residue stretch at 507–695 (GDMEKFIQSS…TLIVQPDRVF (189 aa)) folds into the Rho-GAP domain. The SH3 domain maps to 746–805 (EGVVEAVACFAYTGRTAQELSFRRGDVLRLHERASSDWWRGEHNGMRGLIPHKYITLPAG). 3 positions are modified to phosphoserine: S860, S901, and S906. Positions 885–946 (KTSVRQGLGP…QGLDTTPKPH (62 aa)) are disordered. Residues 901 to 910 (SPGPRSPKAP) show a composition bias toward pro residues. Over residues 924-934 (GPGAPASPSAS) the composition is skewed to low complexity.

Interacts with NCKAP1L. As to expression, predominantly in hematopoietic cells (spleen, thymus and leukocytes); low levels in placenta, lung and various fetal tissues.

It is found in the cytoplasm. Its function is as follows. Inhibitory effect on stress fiber organization. May down-regulate Rho-like GTPase in hematopoietic cells. The sequence is that of Rho GTPase-activating protein 4 from Homo sapiens (Human).